Consider the following 47-residue polypeptide: Large ribosomal subunit protein bL33 (47 aa).

Belongs to the bacterial ribosomal protein bL33 family.

The chain is Large ribosomal subunit protein bL33 from Staphylococcus xylosus.